Reading from the N-terminus, the 1499-residue chain is Collagen alpha-2(V) chain (1499 aa).

An N-terminal signal peptide occupies residues 1 to 26 (MMANWAEARPLLILIVLLGQFVSIKA). The region spanning 39-97 (IACTQNGQMYLNRDIWKPAPCQICVCDNGAILCDKIECQDVLDCADPVTPPGECCPVCS) is the VWFC domain. Positions 104 to 1268 (NTNFGRGRKG…DDKNKTDPGV (1165 aa)) are disordered. Residues 170–182 (PGAPGPPGHPSHP) are compositionally biased toward pro residues. The segment covering 212 to 227 (PGSVGPVGPRGPQGLQ) has biased composition (low complexity). Over residues 236–248 (TGPPGEPGDPGPM) the composition is skewed to pro residues. Hydroxyproline is present on residues proline 290, proline 293, and proline 296. 2 stretches are compositionally biased toward low complexity: residues 322–340 (EAGP…PRGM) and 427–443 (TPGA…SGPP). Positions 506 to 508 (RGD) match the Cell attachment site motif. 2 stretches are compositionally biased toward low complexity: residues 604–626 (SIGI…SGDP) and 694–709 (DQGV…PLGP). A hydroxyproline mark is found at proline 611 and proline 617. Residues 710–721 (RGERGNPGERGE) show a composition bias toward basic and acidic residues. Over residues 732 to 741 (GMAGGHGPDG) the composition is skewed to gly residues. Residues 742–758 (PKGSPGPSGTPGDTGPP) show a composition bias toward low complexity. Residues 776–787 (KGDRGGIGEKGA) show a composition bias toward basic and acidic residues. Low complexity predominate over residues 826-841 (PPGSRGNPGSRGENGP). Gly residues predominate over residues 894–903 (GLKGGRGTQG). Proline 919 carries the post-translational modification 3-hydroxyproline; partial. A compositionally biased stretch (pro residues) spans 919-929 (PPGPAGAPGPA). 6 consecutive short sequence motifs (cell attachment site) follow at residues 944 to 946 (RGD), 1067 to 1069 (RGD), 1070 to 1072 (RGD), 1100 to 1102 (RGD), 1127 to 1129 (RGD), and 1136 to 1138 (RGD). Residues 1063–1072 (AVGERGDRGD) show a composition bias toward basic and acidic residues. Residues 1093-1114 (APGDAGQRGDPGSRGPIGPPGR) are compositionally biased toward low complexity. Positions 1127 to 1141 (RGDKGDHGDRGDRGQ) are enriched in basic and acidic residues. 3-hydroxyproline; partial is present on proline 1156. Pro residues-rich tracts occupy residues 1171 to 1181 (PFGPRGPPGPV) and 1211 to 1226 (EGPP…PGPP). Positions 1230-1499 (TAALGDIMGH…GVEIGPVCFV (270 aa)) are cleaved as a propeptide — C-terminal propeptide. N-linked (GlcNAc...) asparagine glycosylation is present at asparagine 1262. The 234-residue stretch at 1266-1499 (PGVHATLKSL…GVEIGPVCFV (234 aa)) folds into the Fibrillar collagen NC1 domain. 3 cysteine pairs are disulfide-bonded: cysteine 1296/cysteine 1328, cysteine 1336/cysteine 1497, and cysteine 1405/cysteine 1450. Residues aspartate 1314, asparagine 1316, glutamine 1317, and aspartate 1322 each contribute to the Ca(2+) site. N-linked (GlcNAc...) asparagine glycosylation occurs at asparagine 1400.

It belongs to the fibrillar collagen family. Trimers of two alpha 1(V) and one alpha 2(V) chains in most tissues and trimers of one alpha 1(V), one alpha 2(V), and one alpha 3(V) chains in placenta. Post-translationally, prolines at the third position of the tripeptide repeating unit (G-X-P) are hydroxylated in some or all of the chains. Probably 3-hydroxylated on Pro-919 and Pro-1156 by LEPREL1.

The protein resides in the secreted. It is found in the extracellular space. It localises to the extracellular matrix. Type V collagen is a member of group I collagen (fibrillar forming collagen). It is a minor connective tissue component of nearly ubiquitous distribution. Type V collagen binds to DNA, heparan sulfate, thrombospondin, heparin, and insulin. Type V collagen is a key determinant in the assembly of tissue-specific matrices. The sequence is that of Collagen alpha-2(V) chain (COL5A2) from Homo sapiens (Human).